The primary structure comprises 371 residues: tRNA-specific 2-thiouridylase MnmA (371 aa).

Residues 13 to 20 and Met-39 each bind ATP; that span reads GMSGGVDS. Residues 99 to 101 form an interaction with target base in tRNA region; that stretch reads NPD. The active-site Nucleophile is the Cys-104. Cys-104 and Cys-200 are oxidised to a cystine. An ATP-binding site is contributed by Gly-128. The tract at residues 150-152 is interaction with tRNA; that stretch reads KDQ. The active-site Cysteine persulfide intermediate is Cys-200. The segment at 308–309 is interaction with tRNA; that stretch reads RY.

Belongs to the MnmA/TRMU family.

Its subcellular location is the cytoplasm. The enzyme catalyses S-sulfanyl-L-cysteinyl-[protein] + uridine(34) in tRNA + AH2 + ATP = 2-thiouridine(34) in tRNA + L-cysteinyl-[protein] + A + AMP + diphosphate + H(+). Its function is as follows. Catalyzes the 2-thiolation of uridine at the wobble position (U34) of tRNA, leading to the formation of s(2)U34. This is tRNA-specific 2-thiouridylase MnmA from Bacillus cereus (strain ATCC 10987 / NRS 248).